Here is a 134-residue protein sequence, read N- to C-terminus: Probable glycine cleavage system H protein (134 aa).

Residues 29–110 form the Lipoyl-binding domain; it reads TVLVGITDYA…PYEAWIAKIK (82 aa). Residue Lys-70 is modified to N6-lipoyllysine.

The protein belongs to the GcvH family. In terms of assembly, the glycine cleavage system is composed of four proteins: P, T, L and H. (R)-lipoate serves as cofactor.

Its function is as follows. The glycine cleavage system catalyzes the degradation of glycine. The H protein shuttles the methylamine group of glycine from the P protein to the T protein. In Pyrococcus furiosus (strain ATCC 43587 / DSM 3638 / JCM 8422 / Vc1), this protein is Probable glycine cleavage system H protein.